The primary structure comprises 290 residues: UPF0761 membrane protein YihY (290 aa).

6 consecutive transmembrane segments (helical) span residues 44–64 (LLSL…FPMF), 104–124 (VGAC…DSAL), 140–160 (FAVY…SLAI), 183–203 (IFPL…VPTI), 210–230 (AIVG…GFAL), and 244–264 (VLAV…IVLL).

The protein belongs to the UPF0761 family.

The protein resides in the cell inner membrane. In Escherichia fergusonii (strain ATCC 35469 / DSM 13698 / CCUG 18766 / IAM 14443 / JCM 21226 / LMG 7866 / NBRC 102419 / NCTC 12128 / CDC 0568-73), this protein is UPF0761 membrane protein YihY.